The chain runs to 141 residues: Hemoglobin subunit alpha (141 aa).

In terms of domain architecture, Globin spans 1–141; that stretch reads VLSSADKNNV…VSTVLTSKYR (141 aa). Ser3 carries the post-translational modification Phosphoserine. N6-succinyllysine is present on residues Lys7 and Lys11. The residue at position 16 (Lys16) is an N6-acetyllysine; alternate. Lys16 carries the post-translational modification N6-succinyllysine; alternate. Phosphotyrosine is present on Tyr24. Residue Ser35 is modified to Phosphoserine. The residue at position 40 (Lys40) is an N6-succinyllysine. Ser49 is modified (phosphoserine). Position 58 (His58) interacts with O2. His87 contributes to the heme b binding site. The residue at position 102 (Ser102) is a Phosphoserine. A Phosphothreonine modification is found at Thr108. The residue at position 124 (Ser124) is a Phosphoserine. Phosphothreonine is present on residues Thr134 and Thr137. Ser138 bears the Phosphoserine mark.

Belongs to the globin family. As to quaternary structure, heterotetramer of two alpha chains and two beta chains. As to expression, red blood cells.

In terms of biological role, involved in oxygen transport from the lung to the various peripheral tissues. Its function is as follows. Hemopressin acts as an antagonist peptide of the cannabinoid receptor CNR1. Hemopressin-binding efficiently blocks cannabinoid receptor CNR1 and subsequent signaling. This is Hemoglobin subunit alpha (HBA) from Panthera tigris sumatrae (Sumatran tiger).